Here is a 174-residue protein sequence, read N- to C-terminus: MAKQQTKRAQASEERDDGLREKMVAINRVTKVVKGGRILGFAALTVVGDGDGGIGMGKGKSREVPVAVQKAMDEARRKMVKVSLKDGTLQHTVVGKHGAASVLMQPAPGGTGIIAGGPMRAVFEVMGVTDIICKCIGSTNPYNVVRATLNGLMAVNTPAEIAAKRGKTIEEILG.

Residues 19–82 (LREKMVAINR…DEARRKMVKV (64 aa)) enclose the S5 DRBM domain.

The protein belongs to the universal ribosomal protein uS5 family. As to quaternary structure, part of the 30S ribosomal subunit. Contacts proteins S4 and S8.

In terms of biological role, with S4 and S12 plays an important role in translational accuracy. Located at the back of the 30S subunit body where it stabilizes the conformation of the head with respect to the body. The chain is Small ribosomal subunit protein uS5 from Azoarcus sp. (strain BH72).